Here is a 134-residue protein sequence, read N- to C-terminus: Isocitrate dehydrogenase [NAD] subunit alpha, mitochondrial (134 aa).

Position 37 is an N6-succinyllysine (K37). At T50 the chain carries Phosphothreonine. R64, R74, and R95 together coordinate substrate.

The protein belongs to the isocitrate and isopropylmalate dehydrogenases family. In terms of assembly, heterooligomer of subunits alpha (IDH3A), beta (IDH3B), and gamma (IDH3G) in the apparent ratio of 2:1:1. The heterodimer containing one IDH3A and one IDH3B subunit and the heterodimer containing one IDH3A and one IDH3G subunit assemble into a heterotetramer (which contains two subunits of IDH3A, one of IDH3B and one of IDH3G) and further into the heterooctamer. Mg(2+) serves as cofactor. Requires Mn(2+) as cofactor.

It is found in the mitochondrion. The enzyme catalyses D-threo-isocitrate + NAD(+) = 2-oxoglutarate + CO2 + NADH. Its activity is regulated as follows. The heterotetramer and the heterodimer composed of IDH3A and IDH3G subunits can be allosterically activated by citrate (CIT) or/and ADP, and the two activators can act independently or synergistically. The heterodimer composed of IDH3A and IDH3B subunits cannot be allosterically regulated and the allosteric regulation of the heterotetramer is through the IDH3G subunit and not the IDH3B subunit. The IDH3G subunit contains the allosteric site which consists of a CIT-binding site and an ADP-binding site, and the binding of CIT and ADP causes conformational changes at the allosteric site which are transmitted to the active site in the catalytic subunit (IDH3A) through a cascade of conformational changes at the heterodimer interface, leading to stabilization of the isocitrate-binding at the active site and thus activation of the enzyme. ATP can activate the heterotetramer and the heterodimer composed of IDH3A and IDH3G subunits at low concentrations but inhibits their activities at high concentrations, whereas ATP exhibits only inhibitory effect on the heterodimer composed of IDH3A and IDH3B subunits. In terms of biological role, catalytic subunit of the enzyme which catalyzes the decarboxylation of isocitrate (ICT) into alpha-ketoglutarate. The heterodimer composed of the alpha (IDH3A) and beta (IDH3B) subunits and the heterodimer composed of the alpha (IDH3A) and gamma (IDH3G) subunits, have considerable basal activity but the full activity of the heterotetramer (containing two subunits of IDH3A, one of IDH3B and one of IDH3G) requires the assembly and cooperative function of both heterodimers. The protein is Isocitrate dehydrogenase [NAD] subunit alpha, mitochondrial of Mesocricetus auratus (Golden hamster).